The chain runs to 110 residues: Large ribosomal subunit protein uL22 (110 aa).

The protein belongs to the universal ribosomal protein uL22 family. Part of the 50S ribosomal subunit.

In terms of biological role, this protein binds specifically to 23S rRNA; its binding is stimulated by other ribosomal proteins, e.g. L4, L17, and L20. It is important during the early stages of 50S assembly. It makes multiple contacts with different domains of the 23S rRNA in the assembled 50S subunit and ribosome. The globular domain of the protein is located near the polypeptide exit tunnel on the outside of the subunit, while an extended beta-hairpin is found that lines the wall of the exit tunnel in the center of the 70S ribosome. In Methylococcus capsulatus (strain ATCC 33009 / NCIMB 11132 / Bath), this protein is Large ribosomal subunit protein uL22.